The sequence spans 131 residues: Small ribosomal subunit protein uS19 (131 aa).

The protein belongs to the universal ribosomal protein uS19 family.

Protein S19 forms a complex with S13 that binds strongly to the 16S ribosomal RNA. This Nitrosopumilus maritimus (strain SCM1) protein is Small ribosomal subunit protein uS19.